A 315-amino-acid polypeptide reads, in one-letter code: Fe(3+)-citrate-binding protein YfmC (315 aa).

Positions 1-18 (MRTYSNKLIAIMSVLLLA) are cleaved as a signal peptide. Residue Cys-19 is the site of N-palmitoyl cysteine attachment. Cys-19 carries S-diacylglycerol cysteine lipidation. Residues 27–36 (SSQNNNGSGK) show a composition bias toward low complexity. The disordered stretch occupies residues 27 to 52 (SSQNNNGSGKSESKDSRVIHDEEGKT). Basic and acidic residues predominate over residues 37–51 (SESKDSRVIHDEEGK). A Fe/B12 periplasmic-binding domain is found at 60 to 315 (RVVVLELSFL…KDVLKKVYNK (256 aa)).

The protein belongs to the bacterial solute-binding protein 8 family. The complex is composed of one ATP-binding protein (YfmF), two transmembrane proteins (YfmD and YfmE) and a solute-binding protein (YfmC).

The protein resides in the cell membrane. Functionally, part of the ABC transporter complex YfmCDEF involved in citrate-dependent Fe(3+) import. Binds citrate-dependent Fe(3+) and delivers it to the surface of YfmDE. In Bacillus subtilis (strain 168), this protein is Fe(3+)-citrate-binding protein YfmC (yfmC).